The sequence spans 592 residues: Alanine aminotransferase, mitochondrial (592 aa).

Residues 1 to 64 (MLSLSAKNHF…RKVRPVLQRH (64 aa)) constitute a mitochondrion transit peptide. Ser77 bears the Phosphoserine mark. 5 residues coordinate pyridoxal 5'-phosphate: Ala258, Ser259, Tyr284, Asn340, and Ser409. Lys412 is subject to N6-(pyridoxal phosphate)lysine. Residue Arg421 coordinates pyridoxal 5'-phosphate.

This sequence belongs to the class-I pyridoxal-phosphate-dependent aminotransferase family. Alanine aminotransferase subfamily. Homodimer. Pyridoxal 5'-phosphate is required as a cofactor.

Its subcellular location is the mitochondrion matrix. The catalysed reaction is L-alanine + 2-oxoglutarate = pyruvate + L-glutamate. It functions in the pathway amino-acid degradation; L-alanine degradation via transaminase pathway; pyruvate from L-alanine: step 1/1. Its function is as follows. Alanine aminotransferase involved in both alanine biosynthesis and utilization. Under respiratory conditions, constitutes the sole pathway for alanine biosynthesis and catabolism. Under fermentative conditions, it plays a catabolic role and alanine is mainly synthesized through an alternative pathway. In Saccharomyces cerevisiae (strain ATCC 204508 / S288c) (Baker's yeast), this protein is Alanine aminotransferase, mitochondrial (ALT1).